The following is a 49-amino-acid chain: Large ribosomal subunit protein eL40 (49 aa).

This sequence belongs to the eukaryotic ribosomal protein eL40 family.

The sequence is that of Large ribosomal subunit protein eL40 from Methanosarcina barkeri (strain Fusaro / DSM 804).